Reading from the N-terminus, the 427-residue chain is Enolase (427 aa).

Gln-163 is a (2R)-2-phosphoglycerate binding site. The active-site Proton donor is the Glu-205. Mg(2+) is bound by residues Asp-242, Glu-285, and Asp-312. (2R)-2-phosphoglycerate is bound by residues Lys-337, Arg-366, Ser-367, and Lys-388. The active-site Proton acceptor is the Lys-337.

The protein belongs to the enolase family. Mg(2+) is required as a cofactor.

Its subcellular location is the cytoplasm. The protein resides in the secreted. It is found in the cell surface. It carries out the reaction (2R)-2-phosphoglycerate = phosphoenolpyruvate + H2O. The protein operates within carbohydrate degradation; glycolysis; pyruvate from D-glyceraldehyde 3-phosphate: step 4/5. Functionally, catalyzes the reversible conversion of 2-phosphoglycerate (2-PG) into phosphoenolpyruvate (PEP). It is essential for the degradation of carbohydrates via glycolysis. The protein is Enolase of Burkholderia lata (strain ATCC 17760 / DSM 23089 / LMG 22485 / NCIMB 9086 / R18194 / 383).